We begin with the raw amino-acid sequence, 639 residues long: Extracellular metalloproteinase 9 (639 aa).

Residues 1 to 19 (MHGLLLAAGLLSLPLRALG) form the signal peptide. Residues 20–250 (HPNPNPQMHT…IHGVVDYVAD (231 aa)) constitute a propeptide that is removed on maturation. N-linked (GlcNAc...) asparagine glycosylation is present at N278. The segment at 293–312 (PTTRGNNGIAQDNPSGGNQY) is disordered. Position 434 (H434) interacts with Zn(2+). The active site involves E435. A Zn(2+)-binding site is contributed by H438.

This sequence belongs to the peptidase M36 family. Zn(2+) is required as a cofactor.

It localises to the secreted. In terms of biological role, secreted metalloproteinase that allows assimilation of proteinaceous substrates and probably acts as a virulence factor. In Coccidioides posadasii (strain C735) (Valley fever fungus), this protein is Extracellular metalloproteinase 9 (MEP9).